A 117-amino-acid chain; its full sequence is Protein Wnt-10b (117 aa).

Serine 1 carries the O-palmitoleoyl serine; by PORCN lipid modification. Cysteine 83 and cysteine 98 are joined by a disulfide. N-linked (GlcNAc...) asparagine glycosylation occurs at asparagine 84.

Belongs to the Wnt family. Palmitoleoylation is required for efficient binding to frizzled receptors. Depalmitoleoylation leads to Wnt signaling pathway inhibition.

The protein resides in the secreted. It localises to the extracellular space. Its subcellular location is the extracellular matrix. Member of the Wnt ligand gene family that encodes for secreted proteins, which activate the Wnt signaling cascade. Involved in neurogenesis. Performs a partially redundant function with wnt1 in the formation of the midbrain-hindbrain boundary (MHB) organizer. The sequence is that of Protein Wnt-10b (WNT-10B) from Plethodon jordani (Red-cheeked salamander).